We begin with the raw amino-acid sequence, 555 residues long: Inositol 1,4,5-trisphosphate receptor-interacting protein (555 aa).

The signal sequence occupies residues 1–15; the sequence is MAMELFRVCLVVVTA. At 16-81 the chain is on the extracellular side; that stretch reads IINHPLLFPR…VEEEQQQLEA (66 aa). Residue asparagine 27 is glycosylated (N-linked (GlcNAc...) asparagine). Residues 32–84 are a coiled coil; that stretch reads ENEEEIIRKMQEHQEKLRLEQLRLEEEVSRLEAEKEALRQVEEEQQQLEAHTA. Residues 82–102 traverse the membrane as a helical segment; it reads HTAWDLWTTLCMVLFLIIEVL. Over 103–555 the chain is Cytoplasmic; that stretch reads RQNHQEGTFP…ASPPPKAVVS (453 aa).

It belongs to the ITPRIP family. As to quaternary structure, interacts with ITPR.

It is found in the cell membrane. The protein localises to the nucleus outer membrane. Functionally, enhances Ca(2+)-mediated inhibition of inositol 1,4,5-triphosphate receptor (ITPR) Ca(2+) release. This is Inositol 1,4,5-trisphosphate receptor-interacting protein (Itprip) from Mus musculus (Mouse).